The chain runs to 405 residues: Tryptophan synthase beta chain (405 aa).

The residue at position 98 (Lys-98) is an N6-(pyridoxal phosphate)lysine.

It belongs to the TrpB family. As to quaternary structure, tetramer of two alpha and two beta chains. Requires pyridoxal 5'-phosphate as cofactor.

The enzyme catalyses (1S,2R)-1-C-(indol-3-yl)glycerol 3-phosphate + L-serine = D-glyceraldehyde 3-phosphate + L-tryptophan + H2O. The protein operates within amino-acid biosynthesis; L-tryptophan biosynthesis; L-tryptophan from chorismate: step 5/5. In terms of biological role, the beta subunit is responsible for the synthesis of L-tryptophan from indole and L-serine. The sequence is that of Tryptophan synthase beta chain from Methylococcus capsulatus (strain ATCC 33009 / NCIMB 11132 / Bath).